Reading from the N-terminus, the 458-residue chain is Argininosuccinate lyase (458 aa).

This sequence belongs to the lyase 1 family. Argininosuccinate lyase subfamily.

It is found in the cytoplasm. It catalyses the reaction 2-(N(omega)-L-arginino)succinate = fumarate + L-arginine. Its pathway is amino-acid biosynthesis; L-arginine biosynthesis; L-arginine from L-ornithine and carbamoyl phosphate: step 3/3. This Buchnera aphidicola subsp. Baizongia pistaciae (strain Bp) protein is Argininosuccinate lyase.